The chain runs to 234 residues: UPF0758 protein STH371 (234 aa).

Positions 110 to 232 (DLCNPRAVFE…YTSFRERGLL (123 aa)) constitute an MPN domain. Residues histidine 181, histidine 183, and aspartate 194 each contribute to the Zn(2+) site. The JAMM motif signature appears at 181–194 (HNHPSGDPTPSRED).

It belongs to the UPF0758 family.

This is UPF0758 protein STH371 from Symbiobacterium thermophilum (strain DSM 24528 / JCM 14929 / IAM 14863 / T).